The sequence spans 464 residues: Adenosylhomocysteinase (464 aa).

The substrate site is built by threonine 56, aspartate 131, and glutamate 190. Residue 191-193 (TTT) coordinates NAD(+). The substrate site is built by lysine 220 and aspartate 224. NAD(+) is bound by residues asparagine 225, 254–259 (GFGDVG), glutamate 277, asparagine 312, 333–335 (IGH), and asparagine 378.

This sequence belongs to the adenosylhomocysteinase family. It depends on NAD(+) as a cofactor.

Its subcellular location is the cytoplasm. It carries out the reaction S-adenosyl-L-homocysteine + H2O = L-homocysteine + adenosine. The protein operates within amino-acid biosynthesis; L-homocysteine biosynthesis; L-homocysteine from S-adenosyl-L-homocysteine: step 1/1. May play a key role in the regulation of the intracellular concentration of adenosylhomocysteine. The sequence is that of Adenosylhomocysteinase from Zymomonas mobilis subsp. mobilis (strain ATCC 31821 / ZM4 / CP4).